The following is a 217-amino-acid chain: 3,4-dihydroxy-2-butanone 4-phosphate synthase (217 aa).

Residues 37-38, Asp42, 150-154, and Glu174 each bind D-ribulose 5-phosphate; these read RE and RGGHT. Position 38 (Glu38) interacts with Mg(2+). His153 is a Mg(2+) binding site.

It belongs to the DHBP synthase family. Homodimer. It depends on Mg(2+) as a cofactor. Mn(2+) is required as a cofactor.

It catalyses the reaction D-ribulose 5-phosphate = (2S)-2-hydroxy-3-oxobutyl phosphate + formate + H(+). It participates in cofactor biosynthesis; riboflavin biosynthesis; 2-hydroxy-3-oxobutyl phosphate from D-ribulose 5-phosphate: step 1/1. Catalyzes the conversion of D-ribulose 5-phosphate to formate and 3,4-dihydroxy-2-butanone 4-phosphate. The polypeptide is 3,4-dihydroxy-2-butanone 4-phosphate synthase (Citrobacter koseri (strain ATCC BAA-895 / CDC 4225-83 / SGSC4696)).